The chain runs to 122 residues: UPF0102 protein Atu0303 (122 aa).

Belongs to the UPF0102 family.

This Agrobacterium fabrum (strain C58 / ATCC 33970) (Agrobacterium tumefaciens (strain C58)) protein is UPF0102 protein Atu0303.